We begin with the raw amino-acid sequence, 87 residues long: Large ribosomal subunit protein bL27 (87 aa).

This sequence belongs to the bacterial ribosomal protein bL27 family.

The chain is Large ribosomal subunit protein bL27 from Stenotrophomonas maltophilia (strain R551-3).